A 555-amino-acid chain; its full sequence is Glutamine--tRNA ligase (555 aa).

The 'HIGH' region motif lies at 35-45; it reads PEPNGYLHIGH. Residues 36–38 and 42–48 contribute to the ATP site; these read EPN and HIGHAKS. Residues D68 and Y213 each coordinate L-glutamine. ATP-binding positions include T232 and 262–263; that span reads RL. Residues 269–273 carry the 'KMSKS' region motif; that stretch reads ITSKR.

The protein belongs to the class-I aminoacyl-tRNA synthetase family. Monomer.

Its subcellular location is the cytoplasm. The catalysed reaction is tRNA(Gln) + L-glutamine + ATP = L-glutaminyl-tRNA(Gln) + AMP + diphosphate. The polypeptide is Glutamine--tRNA ligase (Azotobacter vinelandii (strain DJ / ATCC BAA-1303)).